Consider the following 433-residue polypeptide: Trigger factor (433 aa).

The 86-residue stretch at 163–248 (GDTVNIDFSG…VNEIKFKDVP (86 aa)) folds into the PPIase FKBP-type domain.

This sequence belongs to the FKBP-type PPIase family. Tig subfamily.

It localises to the cytoplasm. The enzyme catalyses [protein]-peptidylproline (omega=180) = [protein]-peptidylproline (omega=0). Involved in protein export. Acts as a chaperone by maintaining the newly synthesized protein in an open conformation. Functions as a peptidyl-prolyl cis-trans isomerase. The chain is Trigger factor from Staphylococcus epidermidis (strain ATCC 35984 / DSM 28319 / BCRC 17069 / CCUG 31568 / BM 3577 / RP62A).